Reading from the N-terminus, the 301-residue chain is Nucleotide-binding protein Noca_2527 (301 aa).

26 to 33 (GMTGAGRS) provides a ligand contact to ATP. 77-80 (DVRS) contacts GTP.

It belongs to the RapZ-like family.

Its function is as follows. Displays ATPase and GTPase activities. This Nocardioides sp. (strain ATCC BAA-499 / JS614) protein is Nucleotide-binding protein Noca_2527.